The sequence spans 237 residues: Phosphoribosylaminoimidazole-succinocarboxamide synthase (237 aa).

This sequence belongs to the SAICAR synthetase family.

It catalyses the reaction 5-amino-1-(5-phospho-D-ribosyl)imidazole-4-carboxylate + L-aspartate + ATP = (2S)-2-[5-amino-1-(5-phospho-beta-D-ribosyl)imidazole-4-carboxamido]succinate + ADP + phosphate + 2 H(+). It participates in purine metabolism; IMP biosynthesis via de novo pathway; 5-amino-1-(5-phospho-D-ribosyl)imidazole-4-carboxamide from 5-amino-1-(5-phospho-D-ribosyl)imidazole-4-carboxylate: step 1/2. This Oceanobacillus iheyensis (strain DSM 14371 / CIP 107618 / JCM 11309 / KCTC 3954 / HTE831) protein is Phosphoribosylaminoimidazole-succinocarboxamide synthase.